The following is a 248-amino-acid chain: 2,3-bisphosphoglycerate-dependent phosphoglycerate mutase (248 aa).

Substrate-binding positions include R8–N15, T21–G22, R60, E87–Y90, K98, R114–R115, and G183–N184. The active-site Tele-phosphohistidine intermediate is H9. The active-site Proton donor/acceptor is E87.

It belongs to the phosphoglycerate mutase family. BPG-dependent PGAM subfamily.

The enzyme catalyses (2R)-2-phosphoglycerate = (2R)-3-phosphoglycerate. Its pathway is carbohydrate degradation; glycolysis; pyruvate from D-glyceraldehyde 3-phosphate: step 3/5. Catalyzes the interconversion of 2-phosphoglycerate and 3-phosphoglycerate. In Coprothermobacter proteolyticus (strain ATCC 35245 / DSM 5265 / OCM 4 / BT), this protein is 2,3-bisphosphoglycerate-dependent phosphoglycerate mutase.